The chain runs to 599 residues: Elongation factor 4 (599 aa).

Residues 4 to 186 (KFIRNFSIIA…AIIKHVPPPL (183 aa)) enclose the tr-type G domain. GTP contacts are provided by residues 16 to 21 (DHGKST) and 133 to 136 (NKID).

It belongs to the TRAFAC class translation factor GTPase superfamily. Classic translation factor GTPase family. LepA subfamily.

It localises to the cell membrane. The catalysed reaction is GTP + H2O = GDP + phosphate + H(+). In terms of biological role, required for accurate and efficient protein synthesis under certain stress conditions. May act as a fidelity factor of the translation reaction, by catalyzing a one-codon backward translocation of tRNAs on improperly translocated ribosomes. Back-translocation proceeds from a post-translocation (POST) complex to a pre-translocation (PRE) complex, thus giving elongation factor G a second chance to translocate the tRNAs correctly. Binds to ribosomes in a GTP-dependent manner. The chain is Elongation factor 4 from Ureaplasma parvum serovar 3 (strain ATCC 27815 / 27 / NCTC 11736).